A 295-amino-acid chain; its full sequence is 3-hydroxy-5-phosphonooxypentane-2,4-dione thiolase (295 aa).

Lysine 203 functions as the Schiff-base intermediate with substrate in the catalytic mechanism.

The protein belongs to the DeoC/FbaB aldolase family. As to quaternary structure, homodecamer.

The protein resides in the cytoplasm. The catalysed reaction is dihydroxyacetone phosphate + acetyl-CoA = 3-hydroxy-2,4-dioxopentyl phosphate + CoA. Involved in the degradation of phospho-AI-2, thereby terminating induction of the lsr operon and closing the AI-2 signaling cycle. Catalyzes the transfer of an acetyl moiety from 3-hydroxy-5-phosphonooxypentane-2,4-dione to CoA to form glycerone phosphate and acetyl-CoA. The protein is 3-hydroxy-5-phosphonooxypentane-2,4-dione thiolase of Klebsiella pneumoniae subsp. pneumoniae (strain ATCC 700721 / MGH 78578).